Reading from the N-terminus, the 113-residue chain is Hemerythrin (113 aa).

Residues H25, H54, E58, H73, H77, H101, and D106 each contribute to the Fe cation site.

This sequence belongs to the hemerythrin family. Homotrimer.

Functionally, hemerythrin is a respiratory protein in blood cells of certain marine worms. The oxygen-binding site in each chain contains two iron atoms. The chain is Hemerythrin from Siphonosoma cumanense (Sipunculan worm).